The chain runs to 465 residues: Deoxyguanosinetriphosphate triphosphohydrolase-like protein (465 aa).

The segment at 1–22 is disordered; sequence MKWDKLLNDKRRRESGVTRSKN. The region spanning 63 to 252 is the HD domain; the sequence is RLTHSMEVST…LEVADDIAYL (190 aa).

The protein belongs to the dGTPase family. Type 3 subfamily.

This Listeria monocytogenes serovar 1/2a (strain ATCC BAA-679 / EGD-e) protein is Deoxyguanosinetriphosphate triphosphohydrolase-like protein.